Reading from the N-terminus, the 805-residue chain is N-(5-amino-5-carboxypentanoyl)-L-cysteinyl-D-valine synthase (805 aa).

The tract at residues 783 to 805 (PDTGGGAVGSTTTGGVRGELREI) is disordered.

It belongs to the ATP-dependent AMP-binding enzyme family. Requires pantetheine 4'-phosphate as cofactor.

The catalysed reaction is L-2-aminoadipate + L-valine + L-cysteine + 3 ATP + H2O = N-[(5S)-5-amino-5-carboxypentanoyl]-L-cysteinyl-D-valine + 3 AMP + 3 diphosphate + 3 H(+). The protein operates within antibiotic biosynthesis; penicillin G biosynthesis; penicillin G from L-alpha-aminoadipate and L-cysteine and L-valine: step 1/3. Functionally, each of the constituent amino acids of ACV are activated as aminoacyl-adenylates with peptide bonds formed through the participation of amino acid thioester intermediates. The sequence is that of N-(5-amino-5-carboxypentanoyl)-L-cysteinyl-D-valine synthase (pcbAB) from Streptomyces clavuligerus.